We begin with the raw amino-acid sequence, 841 residues long: Probable alpha-glucuronidase A (841 aa).

A signal peptide spans 1–20; sequence MRGLNLFQLILALLLSMVAA. N-linked (GlcNAc...) asparagine glycosylation is found at N51, N76, N85, N149, N222, N279, N310, N343, N450, N465, N527, N576, N682, N723, and N732.

Belongs to the glycosyl hydrolase 67 family.

It localises to the secreted. The enzyme catalyses an alpha-D-glucuronoside + H2O = D-glucuronate + an alcohol. Its function is as follows. Alpha-glucuronidase involved in the hydrolysis of xylan, a major structural heterogeneous polysaccharide found in plant biomass representing the second most abundant polysaccharide in the biosphere, after cellulose. Releases 4-O-methylglucuronic acid from xylan. This Aspergillus niger (strain ATCC MYA-4892 / CBS 513.88 / FGSC A1513) protein is Probable alpha-glucuronidase A (aguA).